The primary structure comprises 530 residues: Negative elongation factor A (530 aa).

Residues 89–248 enclose the HDAg domain; the sequence is WVLMVADILK…TPIPPSRTPL (160 aa). The segment at 125 to 188 is NELF-C/D-binding; it reads REKVSECEAS…LQKSTETAQQ (64 aa). At Thr157 the chain carries Phosphothreonine. Residues 189–248 are RNAPII-binding; it reads LKRSAGVPFHAKGRGLLRKMDTTTPLKGIPKQAPFRSPTTPSVFSPSGNRTPIPPSRTPL. Disordered regions lie at residues 213 to 248, 266 to 296, and 312 to 409; these read PLKG…RTPL, GAGR…VENA, and SLNS…TAQT. Ser225 and Ser233 each carry phosphoserine. The segment covering 225–238 has biased composition (polar residues); it reads SPTTPSVFSPSGNR. At Thr277 the chain carries Phosphothreonine. The segment covering 277 to 291 has biased composition (basic and acidic residues); that stretch reads TLDTEVVEKPTKEET. The segment covering 315 to 341 has biased composition (low complexity); it reads SEPTLPSTSYLPSTPSVVPASSYIPSS. Phosphoserine is present on Ser363.

It belongs to the NELF-A family. As to quaternary structure, the NELF complex is composed of NELFA, NELFB, NELFCD and NELFE; NELFA and NELFCD form a stable subcomplex that binds to the N-terminus of NELFB. In vitro, the NELFA:NELFCD subcomplex binds to ssDNA and ssRNA in a sequence- and structure-dependent manner. Interacts with the RNA polymerase II complex when it is not phosphorylated by P-TEFb. Interacts with NELFB. Ubiquitous. Expressed in brain, heart, spleen, lung, liver, muscle, kidney and testis. Already expressed in 7 dpc embryos.

The protein localises to the nucleus. In terms of biological role, essential component of the NELF complex, a complex that negatively regulates the elongation of transcription by RNA polymerase II. The NELF complex, which acts via an association with the DSIF complex and causes transcriptional pausing, is counteracted by the P-TEFb kinase complex. This Mus musculus (Mouse) protein is Negative elongation factor A (Nelfa).